A 306-amino-acid polypeptide reads, in one-letter code: Tyrosine recombinase XerC (306 aa).

One can recognise a Core-binding (CB) domain in the interval 1-85 (MQQQLEQFLA…AIKSFFEYLQ (85 aa)). A Tyr recombinase domain is found at 106–289 (FLPKAITVAQ…SNDRAVKYDQ (184 aa)). Residues R147, K171, H241, R244, and H267 contribute to the active site. Y276 (O-(3'-phospho-DNA)-tyrosine intermediate) is an active-site residue.

The protein belongs to the 'phage' integrase family. XerC subfamily. As to quaternary structure, forms a cyclic heterotetrameric complex composed of two molecules of XerC and two molecules of XerD.

The protein localises to the cytoplasm. Site-specific tyrosine recombinase, which acts by catalyzing the cutting and rejoining of the recombining DNA molecules. The XerC-XerD complex is essential to convert dimers of the bacterial chromosome into monomers to permit their segregation at cell division. It also contributes to the segregational stability of plasmids. This is Tyrosine recombinase XerC from Herpetosiphon aurantiacus (strain ATCC 23779 / DSM 785 / 114-95).